The following is a 311-amino-acid chain: Malate dehydrogenase (311 aa).

NAD(+) contacts are provided by residues Gly-7–Gly-13 and Asp-34. Substrate-binding residues include Arg-81 and Arg-87. Residues Asn-94 and Ile-117–Asn-119 each bind NAD(+). Substrate-binding residues include Asn-119 and Arg-153. His-177 (proton acceptor) is an active-site residue. Position 227 (Met-227) interacts with NAD(+).

Belongs to the LDH/MDH superfamily. MDH type 1 family. As to quaternary structure, homodimer.

The catalysed reaction is (S)-malate + NAD(+) = oxaloacetate + NADH + H(+). In terms of biological role, catalyzes the reversible oxidation of malate to oxaloacetate. This is Malate dehydrogenase from Shewanella loihica (strain ATCC BAA-1088 / PV-4).